The sequence spans 159 residues: Large ribosomal subunit protein uL11 (159 aa).

The protein belongs to the universal ribosomal protein uL11 family. Part of the ribosomal stalk of the 50S ribosomal subunit. Interacts with L10 and the large rRNA to form the base of the stalk. L10 forms an elongated spine to which L12 dimers bind in a sequential fashion forming a multimeric L10(L12)X complex.

In terms of biological role, forms part of the ribosomal stalk which helps the ribosome interact with GTP-bound translation factors. The polypeptide is Large ribosomal subunit protein uL11 (Nitrosopumilus maritimus (strain SCM1)).